The sequence spans 515 residues: 2,3-bisphosphoglycerate-independent phosphoglycerate mutase (515 aa).

Aspartate 14 and serine 64 together coordinate Mn(2+). Serine 64 functions as the Phosphoserine intermediate in the catalytic mechanism. Residues histidine 125, arginine 155–aspartate 156, arginine 187, arginine 193, arginine 263–arginine 266, and lysine 337 each bind substrate. Aspartate 404, histidine 408, aspartate 445, histidine 446, and histidine 464 together coordinate Mn(2+).

Belongs to the BPG-independent phosphoglycerate mutase family. As to quaternary structure, monomer. The cofactor is Mn(2+).

The enzyme catalyses (2R)-2-phosphoglycerate = (2R)-3-phosphoglycerate. It functions in the pathway carbohydrate degradation; glycolysis; pyruvate from D-glyceraldehyde 3-phosphate: step 3/5. Catalyzes the interconversion of 2-phosphoglycerate and 3-phosphoglycerate. In Pseudomonas paraeruginosa (strain DSM 24068 / PA7) (Pseudomonas aeruginosa (strain PA7)), this protein is 2,3-bisphosphoglycerate-independent phosphoglycerate mutase.